Consider the following 135-residue polypeptide: Retinol-binding protein 1 (135 aa).

Residues 22-32 are important for interaction with STRA6; it reads RALDVNVALRK. Residues Lys-41, Met-63, and Gln-109 each contribute to the all-trans-retinol site.

Belongs to the calycin superfamily. Fatty-acid binding protein (FABP) family. As to quaternary structure, interacts (only as retinol-free apoprotein) with STRA6.

It is found in the cytoplasm. The protein localises to the lipid droplet. Its function is as follows. Cytoplasmic retinol-binding protein. Accepts retinol from the transport protein STRA6, and thereby contributes to retinol uptake, storage and retinoid homeostasis. In Mus musculus (Mouse), this protein is Retinol-binding protein 1 (Rbp1).